The sequence spans 212 residues: Dephospho-CoA kinase (212 aa).

The DPCK domain maps to 3–204 (ILGLTGSIGM…GSRPAAPVGG (202 aa)). Residue 11-16 (GMGKST) coordinates ATP.

This sequence belongs to the CoaE family.

The protein resides in the cytoplasm. It catalyses the reaction 3'-dephospho-CoA + ATP = ADP + CoA + H(+). It functions in the pathway cofactor biosynthesis; coenzyme A biosynthesis; CoA from (R)-pantothenate: step 5/5. Catalyzes the phosphorylation of the 3'-hydroxyl group of dephosphocoenzyme A to form coenzyme A. This chain is Dephospho-CoA kinase, found in Paramagnetospirillum magneticum (strain ATCC 700264 / AMB-1) (Magnetospirillum magneticum).